The primary structure comprises 286 residues: tRNA (guanine-N(7)-)-methyltransferase (286 aa).

Residues glycine 91, 114-115 (EI), 158-159 (NS), and leucine 178 contribute to the S-adenosyl-L-methionine site. The active site involves aspartate 181. Position 256–258 (256–258 (TEE)) interacts with S-adenosyl-L-methionine.

This sequence belongs to the class I-like SAM-binding methyltransferase superfamily. TrmB family. As to quaternary structure, forms a complex with TRM82.

It is found in the nucleus. The enzyme catalyses guanosine(46) in tRNA + S-adenosyl-L-methionine = N(7)-methylguanosine(46) in tRNA + S-adenosyl-L-homocysteine. It participates in tRNA modification; N(7)-methylguanine-tRNA biosynthesis. Functionally, catalyzes the formation of N(7)-methylguanine at position 46 (m7G46) in tRNA. This chain is tRNA (guanine-N(7)-)-methyltransferase, found in Cryptococcus neoformans var. neoformans serotype D (strain B-3501A) (Filobasidiella neoformans).